The chain runs to 344 residues: Zinc transporter 9 (344 aa).

A helical transmembrane segment spans residues 1–21; sequence MASILISGAAGVSIPLVGTLL. At 22 to 30 the chain is on the cytoplasmic side; the sequence is PLNGGLMRG. The chain crosses the membrane as a helical span at residues 31 to 51; sequence AKAFAAGVILATGFVHMLSGG. Over 52–72 the chain is Extracellular; the sequence is SKALSDPCLPEFPWKMFPFPE. A helical transmembrane segment spans residues 73-93; sequence FFAMVAALLTLLADFMITGYY. Over 94–188 the chain is Cytoplasmic; it reads ERKQEKMMNQ…DVGLDSGVRH (95 aa). A helical membrane pass occupies residues 189 to 209; that stretch reads VVVSQILEMGIVSHSIIIGIS. Residues 210–221 are Extracellular-facing; the sequence is LGVSHSPCTIRP. The chain crosses the membrane as a helical span at residues 222 to 242; the sequence is LLLALSFHQFFEGFALGGCVA. Topologically, residues 243–251 are cytoplasmic; that stretch reads EARLTPRGS. The helical transmembrane segment at 252–272 threads the bilayer; it reads AMMAFFFAITTPIGVAVGTAI. Residues 273 to 291 are Extracellular-facing; the sequence is ASSYNSYSVAALVAEGVLD. The chain crosses the membrane as a helical span at residues 292–312; it reads SLSAGILVYMALVDLIAADFL. The Cytoplasmic segment spans residues 313 to 323; the sequence is SKKMSVDFRVQ. The helical transmembrane segment at 324–344 threads the bilayer; it reads VVSYCFLFLGAGMMSALAIWA.

Belongs to the ZIP transporter (TC 2.A.5) family.

It localises to the cell membrane. In terms of biological role, zinc transporter involved in zinc uptake in roots. Targeted by BZIP19 transcription factor in response to zinc-deficient conditions. The protein is Zinc transporter 9 (ZIP9) of Arabidopsis thaliana (Mouse-ear cress).